Here is a 298-residue protein sequence, read N- to C-terminus: MHALMRLFSDYTLQNVVLGTLFLGLGSGLVGSFAVLRRQSLFGDAVSHATLPGIVIAFLLTGTKSTEILLLGAALSGLVGTVVMLMVMRTTKIDTDGAQGIVLGVFLGFGFLLLTHVQKSPQAAKAGLNKFILGQAATILQRDVLLIIAMEVVIGLLVLLFWKELKLSTFDRDFSAVQGFSPQLMEFMLTALIVVAVVVGVQAVGVILMSALLTAPAVAARQWTNSLRVLCALAALFGGVSGVSGSVVSAQVPRLSTGPVIVLVLTGIALVSIMLGPQRGVLYQLWRRRRVSLLQEEG.

8 consecutive transmembrane segments (helical) span residues 16–36 (VVLG…FAVL), 41–61 (LFGD…FLLT), 68–88 (ILLL…LMVM), 97–117 (GAQG…LTHV), 144–164 (VLLI…FWKE), 187–207 (FMLT…VGVI), 229–249 (VLCA…SVVS), and 255–275 (LSTG…SIML).

Belongs to the ABC-3 integral membrane protein family.

It localises to the cell membrane. Functionally, part of an ATP-driven transport system TroABCD for zinc. The chain is Zinc transport system membrane protein TroC (troC) from Treponema pallidum (strain Nichols).